The chain runs to 211 residues: Mediator of RNA polymerase II transcription subunit 20 (211 aa).

The protein belongs to the Mediator complex subunit 20 family. As to quaternary structure, component of the Mediator complex.

It is found in the nucleus. Functionally, component of the Mediator complex, a coactivator involved in the regulated transcription of nearly all RNA polymerase II-dependent genes. Mediator functions as a bridge to convey information from gene-specific regulatory proteins to the basal RNA polymerase II transcription machinery. Mediator is recruited to promoters by direct interactions with regulatory proteins and serves as a scaffold for the assembly of a functional preinitiation complex with RNA polymerase II and the general transcription factors. In Gallus gallus (Chicken), this protein is Mediator of RNA polymerase II transcription subunit 20 (MED20).